The primary structure comprises 390 residues: Homoserine O-acetyltransferase (390 aa).

An AB hydrolase-1 domain is found at asparagine 55–leucine 366. The Nucleophile role is filled by serine 163. Arginine 232 contributes to the substrate binding site. Active-site residues include aspartate 329 and histidine 362. Aspartate 363 serves as a coordination point for substrate.

It belongs to the AB hydrolase superfamily. MetX family. Homodimer.

The protein localises to the cytoplasm. It catalyses the reaction L-homoserine + acetyl-CoA = O-acetyl-L-homoserine + CoA. Its pathway is amino-acid biosynthesis; L-methionine biosynthesis via de novo pathway; O-acetyl-L-homoserine from L-homoserine: step 1/1. Functionally, transfers an acetyl group from acetyl-CoA to L-homoserine, forming acetyl-L-homoserine. This is Homoserine O-acetyltransferase from Desulfotalea psychrophila (strain LSv54 / DSM 12343).